The primary structure comprises 86 residues: Superoxide dismutase [Cu-Zn] (86 aa).

A disordered region spans residues 1–26 (AKEKGGKLTAGLAAGGHWNPNKAPHH). Over residues 7-16 (KLTAGLAAGG) the composition is skewed to low complexity. His-17 contributes to the Cu cation binding site. Residues His-17, His-26, His-35, and Asp-38 each coordinate Zn(2+). His-73 provides a ligand contact to Cu cation.

It belongs to the Cu-Zn superoxide dismutase family. As to quaternary structure, homodimer. The cofactor is Cu cation. Requires Zn(2+) as cofactor.

It localises to the periplasm. It catalyses the reaction 2 superoxide + 2 H(+) = H2O2 + O2. In terms of biological role, destroys radicals which are normally produced within the cells and which are toxic to biological systems. The protein is Superoxide dismutase [Cu-Zn] (sodC) of Mannheimia haemolytica (Pasteurella haemolytica).